A 360-amino-acid polypeptide reads, in one-letter code: GTP 3',8-cyclase (360 aa).

The disordered stretch occupies residues 1–31 (MTVTALGVPTVRGRSEGSAVASDAPGDGPLL). The Radical SAM core domain maps to 33 to 251 (RFGRSATDLR…LQPHFRLRPD (219 aa)). R42 provides a ligand contact to GTP. Positions 49 and 53 each coordinate [4Fe-4S] cluster. S-adenosyl-L-methionine is bound at residue Y55. C56 is a binding site for [4Fe-4S] cluster. A GTP-binding site is contributed by R93. An S-adenosyl-L-methionine-binding site is contributed by G97. T124 contacts GTP. Position 148 (S148) interacts with S-adenosyl-L-methionine. K185 lines the GTP pocket. M219 serves as a coordination point for S-adenosyl-L-methionine. C287 and C290 together coordinate [4Fe-4S] cluster. 292–294 (RTR) provides a ligand contact to GTP. C304 provides a ligand contact to [4Fe-4S] cluster.

The protein belongs to the radical SAM superfamily. MoaA family. Monomer and homodimer. [4Fe-4S] cluster serves as cofactor.

The enzyme catalyses GTP + AH2 + S-adenosyl-L-methionine = (8S)-3',8-cyclo-7,8-dihydroguanosine 5'-triphosphate + 5'-deoxyadenosine + L-methionine + A + H(+). It participates in cofactor biosynthesis; molybdopterin biosynthesis. Functionally, catalyzes the cyclization of GTP to (8S)-3',8-cyclo-7,8-dihydroguanosine 5'-triphosphate. In Mycobacterium ulcerans (strain Agy99), this protein is GTP 3',8-cyclase.